The sequence spans 264 residues: Thiazole synthase (264 aa).

Residue K106 is the Schiff-base intermediate with DXP of the active site. 1-deoxy-D-xylulose 5-phosphate contacts are provided by residues G167, 193–194, and 215–216; these read AG and NT.

The protein belongs to the ThiG family. As to quaternary structure, homotetramer. Forms heterodimers with either ThiH or ThiS.

Its subcellular location is the cytoplasm. The catalysed reaction is [ThiS sulfur-carrier protein]-C-terminal-Gly-aminoethanethioate + 2-iminoacetate + 1-deoxy-D-xylulose 5-phosphate = [ThiS sulfur-carrier protein]-C-terminal Gly-Gly + 2-[(2R,5Z)-2-carboxy-4-methylthiazol-5(2H)-ylidene]ethyl phosphate + 2 H2O + H(+). The protein operates within cofactor biosynthesis; thiamine diphosphate biosynthesis. Functionally, catalyzes the rearrangement of 1-deoxy-D-xylulose 5-phosphate (DXP) to produce the thiazole phosphate moiety of thiamine. Sulfur is provided by the thiocarboxylate moiety of the carrier protein ThiS. In vitro, sulfur can be provided by H(2)S. The polypeptide is Thiazole synthase (Xylella fastidiosa (strain Temecula1 / ATCC 700964)).